Here is a 484-residue protein sequence, read N- to C-terminus: Zinc metalloproteinase-disintegrin stejnitin (484 aa).

The N-terminal stretch at M1–S20 is a signal peptide. Positions I21–E192 are excised as a propeptide. A Pyrrolidone carboxylic acid modification is found at Q193. In terms of domain architecture, Peptidase M12B spans R194–P392. E197 contributes to the Ca(2+) binding site. An N-linked (GlcNAc...) asparagine glycan is attached at N254. Residue D281 participates in Ca(2+) binding. Cystine bridges form between C305–C387, C345–C369, and C347–C352. Zn(2+) is bound by residues H330, H334, and H340. C387, N390, V402, N405, E409, E412, and D415 together coordinate Ca(2+). The 85-residue stretch at P400 to A484 folds into the Disintegrin domain. 7 disulfides stabilise this stretch: C403/C422, C414/C432, C416/C427, C426/C449, C440/C446, C445/C470, and C458/C477. The short motif at K462–D464 is the Cell attachment site element.

Belongs to the venom metalloproteinase (M12B) family. P-II subfamily. P-IIb sub-subfamily. The cofactor is Zn(2+). The N-terminus is blocked. Expressed by the venom gland.

It is found in the secreted. Its function is as follows. Snake venom zinc metalloproteinase that inhibits ADP-induced platelet aggregation in human platelet-rich plasma (IC(50) is 175 nM) and cleaves alpha-(FGA) and subsequently the beta-chain (FGG) of bovine fibrinogen, leaving the gamma-chain unaffected. It is also able to inhibit proliferatin of ECV304 cells by inducing apoptosis of these cells. In Trimeresurus stejnegeri (Chinese green tree viper), this protein is Zinc metalloproteinase-disintegrin stejnitin.